The primary structure comprises 156 residues: ATP synthase subunit b (156 aa).

A helical transmembrane segment spans residues 11-31 (AIAFVIFVWFCMKYVWPPLMA).

The protein belongs to the ATPase B chain family. As to quaternary structure, F-type ATPases have 2 components, F(1) - the catalytic core - and F(0) - the membrane proton channel. F(1) has five subunits: alpha(3), beta(3), gamma(1), delta(1), epsilon(1). F(0) has three main subunits: a(1), b(2) and c(10-14). The alpha and beta chains form an alternating ring which encloses part of the gamma chain. F(1) is attached to F(0) by a central stalk formed by the gamma and epsilon chains, while a peripheral stalk is formed by the delta and b chains.

It is found in the cell inner membrane. In terms of biological role, f(1)F(0) ATP synthase produces ATP from ADP in the presence of a proton or sodium gradient. F-type ATPases consist of two structural domains, F(1) containing the extramembraneous catalytic core and F(0) containing the membrane proton channel, linked together by a central stalk and a peripheral stalk. During catalysis, ATP synthesis in the catalytic domain of F(1) is coupled via a rotary mechanism of the central stalk subunits to proton translocation. Component of the F(0) channel, it forms part of the peripheral stalk, linking F(1) to F(0). The chain is ATP synthase subunit b from Klebsiella pneumoniae (strain 342).